The chain runs to 323 residues: Acetyl-coenzyme A carboxylase carboxyl transferase subunit alpha 1 (323 aa).

Positions 39–293 (RLSKKSQQLT…RRALGDSLRQ (255 aa)) constitute a CoA carboxyltransferase C-terminal domain.

Belongs to the AccA family. In terms of assembly, acetyl-CoA carboxylase is a heterohexamer composed of biotin carboxyl carrier protein (AccB), biotin carboxylase (AccC) and two subunits each of ACCase subunit alpha (AccA) and ACCase subunit beta (AccD).

The protein resides in the cytoplasm. It catalyses the reaction N(6)-carboxybiotinyl-L-lysyl-[protein] + acetyl-CoA = N(6)-biotinyl-L-lysyl-[protein] + malonyl-CoA. Its pathway is lipid metabolism; malonyl-CoA biosynthesis; malonyl-CoA from acetyl-CoA: step 1/1. Component of the acetyl coenzyme A carboxylase (ACC) complex. First, biotin carboxylase catalyzes the carboxylation of biotin on its carrier protein (BCCP) and then the CO(2) group is transferred by the carboxyltransferase to acetyl-CoA to form malonyl-CoA. Its function is as follows. Does not confer resistance to the endogenous polyketide antibiotic thailandamide, does not confer resistance to thailandamide when expressed in S.typhimurium. This chain is Acetyl-coenzyme A carboxylase carboxyl transferase subunit alpha 1, found in Burkholderia thailandensis (strain ATCC 700388 / DSM 13276 / CCUG 48851 / CIP 106301 / E264).